A 618-amino-acid chain; its full sequence is Rho guanine nucleotide exchange factor 25 (618 aa).

2 disordered regions span residues 26–63 and 169–193; these read CAVPGQEGPPERDPLGPGSTKTESDCIEEDQTGQREPE and GPGDKAQPAEEETLSQAPKNEEEQK. The DH domain occupies 199-375; it reads RSMFVLGELV…CFVPKRCNDM (177 aa). Positions 317-338 are important for binding to Rho GTPases; sequence LGHRLQLNDLLIKPVQRIMKYQ. Residues 387-505 form the PH domain; that stretch reads KLTAQGKLLG…WIKQVAQILE (119 aa). The tract at residues 506 to 532 is sufficient to bind activated GNAQ; that stretch reads SQRDFLNALQSPIEYQRRESQTNSLGR. Disordered stretches follow at residues 521 to 556 and 584 to 604; these read QRRESQTNSLGRPGGPWVGSPGRMRPGDLAQASMHT and ALSDTPQTPHDSPALPTVNTP. Polar residues predominate over residues 584–593; it reads ALSDTPQTPH.

Interacts with activated GNAQ and GNA11. Interacts (via the DH domain) with POPDC1 (via the C-terminus cytoplasmic tail). Interacts with RHOA, CDC42 and RAC1. Highly expressed in excitable tissues, such as brain, heart and muscle. Elevated expression in hippocampus and cerebellum.

The protein localises to the cytoplasm. The protein resides in the myofibril. It is found in the sarcomere. It localises to the cell membrane. In terms of biological role, may play a role in actin cytoskeleton reorganization in different tissues since its activation induces formation of actin stress fibers. It works as a guanine nucleotide exchange factor for Rho family of small GTPases. Links specifically G alpha q/11-coupled receptors to RHOA activation. May be an important regulator of processes involved in axon and dendrite formation. In neurons seems to be an exchange factor primarily for RAC1. Involved in skeletal myogenesis. In Mus musculus (Mouse), this protein is Rho guanine nucleotide exchange factor 25 (Arhgef25).